The primary structure comprises 514 residues: JmjC domain-containing histone demethylation protein 1 (514 aa).

The PHD-type zinc finger occupies 4–62; that stretch reads IDTCPICVESPLEDSTTFNNIAWLQCDICNQWFHASCLKIPKIEVNNLHSYHCEGCSKS. A JmjC domain is found at 220-384; it reads SDVDSFGKSF…MHLRIYEIEK (165 aa). Threonine 267 contributes to the substrate binding site. Fe cation-binding residues include histidine 270 and aspartate 272. Lysine 287 serves as a coordination point for substrate. Histidine 352 is a binding site for Fe cation. Residues 432-454 show a composition bias toward basic and acidic residues; the sequence is KSEAHSRGEVHTKTETHAVKDEP. Positions 432 to 456 are disordered; the sequence is KSEAHSRGEVHTKTETHAVKDEPQP.

Belongs to the JHDM1 histone demethylase family. Requires Fe(2+) as cofactor.

It localises to the nucleus. The enzyme catalyses N(6),N(6)-dimethyl-L-lysyl(36)-[histone H3] + 2 2-oxoglutarate + 2 O2 = L-lysyl(36)-[histone H3] + 2 formaldehyde + 2 succinate + 2 CO2. Histone demethylase that specifically demethylates 'Lys-36' of histone H3, thereby playing a central role in histone code. This Debaryomyces hansenii (strain ATCC 36239 / CBS 767 / BCRC 21394 / JCM 1990 / NBRC 0083 / IGC 2968) (Yeast) protein is JmjC domain-containing histone demethylation protein 1 (JHD1).